The primary structure comprises 277 residues: S-formylglutathione hydrolase FrmB (277 aa).

Residues serine 145, aspartate 221, and histidine 254 each act as charge relay system in the active site.

The protein belongs to the esterase D family.

The catalysed reaction is S-formylglutathione + H2O = formate + glutathione + H(+). Its function is as follows. Serine hydrolase involved in the detoxification of formaldehyde. Hydrolyzes S-formylglutathione to glutathione and formate. This is S-formylglutathione hydrolase FrmB (frmB) from Escherichia coli O1:K1 / APEC.